The chain runs to 26 residues: Halocyntin (26 aa).

Functionally, has strong antibacterial activity against the Gram-positive bacteria M.luteus, S.aureus, B.megaterium, A.viridans and E.faecalis, and against the Gram-negative bacterium K.pneumoniae. Has less potent antibacterial activity against the Gram-negative bacteria E.coli DH5alpha, S.typhimurium, P.aeruginosa, E.aerogenes and N.gonorrhoeae. Has moderate hemolytic activity against sheep erythrocytes. In Halocynthia papillosa (Red sea-squirt), this protein is Halocyntin.